A 671-amino-acid polypeptide reads, in one-letter code: UvrABC system protein B (671 aa).

The Helicase ATP-binding domain occupies 25–412; that stretch reads EGIDAGLAHQ…AGRIVEQVVR (388 aa). 38–45 contacts ATP; sequence GVTGSGKT. Positions 91–114 match the Beta-hairpin motif; that stretch reads YYDYYQPEAYVPSSDTFIEKDASI. One can recognise a Helicase C-terminal domain in the interval 429 to 582; the sequence is QVDDLLSEIH…QIAFNLEHGI (154 aa). Residues 601–624 form a disordered region; it reads PGSRSKKRKGMAKAAEENARYENE. The segment covering 614-624 has biased composition (basic and acidic residues); sequence AAEENARYENE. A UVR domain is found at 632–667; the sequence is NKRIRQLEEKMYQLARDLEFEAAAQMRDEIGKLRER.

It belongs to the UvrB family. Forms a heterotetramer with UvrA during the search for lesions. Interacts with UvrC in an incision complex.

It is found in the cytoplasm. The UvrABC repair system catalyzes the recognition and processing of DNA lesions. A damage recognition complex composed of 2 UvrA and 2 UvrB subunits scans DNA for abnormalities. Upon binding of the UvrA(2)B(2) complex to a putative damaged site, the DNA wraps around one UvrB monomer. DNA wrap is dependent on ATP binding by UvrB and probably causes local melting of the DNA helix, facilitating insertion of UvrB beta-hairpin between the DNA strands. Then UvrB probes one DNA strand for the presence of a lesion. If a lesion is found the UvrA subunits dissociate and the UvrB-DNA preincision complex is formed. This complex is subsequently bound by UvrC and the second UvrB is released. If no lesion is found, the DNA wraps around the other UvrB subunit that will check the other stand for damage. This is UvrABC system protein B from Pseudomonas syringae pv. syringae (strain B728a).